We begin with the raw amino-acid sequence, 157 residues long: Regenerating islet-derived protein 4 (157 aa).

The first 22 residues, 1 to 22 (MASKCVRLLLLLSWVAGPEVLS), serve as a signal peptide directing secretion. A disulfide bridge connects residues cysteine 29 and cysteine 40. Residues 36-154 (YRSHCYGYFR…CTKRQHFLCK (119 aa)) form the C-type lectin domain. 3 N-linked (GlcNAc...) asparagine glycosylation sites follow: asparagine 49, asparagine 62, and asparagine 101. Intrachain disulfides connect cysteine 57-cysteine 153 and cysteine 128-cysteine 145. A carbohydrate is bound by residues 97-101 (DPQKN) and 134-136 (KDK).

Its subcellular location is the secreted. Its function is as follows. Calcium-independent lectin displaying mannose-binding specificity and able to maintain carbohydrate recognition activity in an acidic environment. May be involved in inflammatory and metaplastic responses of the gastrointestinal epithelium. This is Regenerating islet-derived protein 4 (Reg4) from Rattus norvegicus (Rat).